Here is a 698-residue protein sequence, read N- to C-terminus: Probable threonine--tRNA ligase 2, cytoplasmic (698 aa).

The TGS domain maps to 38 to 100 (GGGNIKLNDG…EMSGKDYNIE (63 aa)). Residues 541-560 (NNNNNNNNNNEEINDNNNNN) form a disordered region.

It belongs to the class-II aminoacyl-tRNA synthetase family.

It is found in the cytoplasm. It catalyses the reaction tRNA(Thr) + L-threonine + ATP = L-threonyl-tRNA(Thr) + AMP + diphosphate + H(+). The polypeptide is Probable threonine--tRNA ligase 2, cytoplasmic (thrS2) (Dictyostelium discoideum (Social amoeba)).